The chain runs to 170 residues: Cathelicidin antimicrobial peptide (170 aa).

The N-terminal stretch at 1-30 (MKTQRDGHSLGWWSLVLLLLGLVMPLAIIA) is a signal peptide. Residues 31-131 (QVLSYKEAVL…DISCDKDNKR (101 aa)) constitute a propeptide, cathelin-like domain (CLD). 2 disulfides stabilise this stretch: C86–C97 and C108–C125. Residues 150 to 162 (SKRIVQRIKDFLR) form an active core region.

It belongs to the cathelicidin family. In terms of assembly, monomer, homodimer or homotrimer (in vitro). Oligomerizes as tetra- or hexamer in solution (in vitro). Post-translationally, proteolytically cleaved by proteinase PRTN3 into antibacterial peptide LL-37. Proteolytically cleaved by cathepsin CTSG and neutrophil elastase ELANE. In terms of processing, resistant to proteolytic degradation in solution, and when bound to both zwitterionic (mimicking mammalian membranes) and negatively charged membranes (mimicking bacterial membranes). After secretion onto the skin surface, the CAMP gene product is processed by a serine protease-dependent mechanism into multiple novel antimicrobial peptides distinct from and shorter than cathelicidin LL-37. These peptides show enhanced antimicrobial action, acquiring the ability to kill skin pathogens such as S.aureus, E.coli and C.albicans. These peptides have lost the ability to stimulate CXCL8/IL8 release from keratinocytes. The peptides act synergistically, killing bacteria at lower concentrations when present together, and maintain activity at increased salt condition.

Its subcellular location is the secreted. It is found in the vesicle. Functionally, antimicrobial protein that is an integral component of the innate immune system. Binds to bacterial lipopolysaccharides (LPS). Acts via neutrophil N-formyl peptide receptors to enhance the release of CXCL2. Postsecretory processing generates multiple cathelicidin antimicrobial peptides with various lengths which act as a topical antimicrobial defense in sweat on skin. The unprocessed precursor form, cathelicidin antimicrobial peptide, inhibits the growth of Gram-negative E.coli and E.aerogenes with efficiencies comparable to that of the mature peptide LL-37 (in vitro). In terms of biological role, antimicrobial peptide that is an integral component of the innate immune system. Binds to bacterial lipopolysaccharides (LPS). Causes membrane permeabilization by forming transmembrane pores (in vitro). Causes lysis of E.coli. Exhibits antimicrobial activity against Gram-negative bacteria such as P.aeruginosa, S.typhimurium, E.aerogenes, E.coli and P.syringae, Gram-positive bacteria such as L.monocytogenes, S.epidermidis, S.pyogenes and S.aureus, as well as vancomycin-resistant enterococci (in vitro). Exhibits antimicrobial activity against methicillin-resistant S.aureus, P.mirabilis, and C.albicans in low-salt media, but not in media containing 100 mM NaCl (in vitro). Forms chiral supramolecular assemblies with quinolone signal (PQS) molecules of P.aeruginosa, which may lead to interference of bacterial quorum signaling and perturbance of bacterial biofilm formation. May form supramolecular fiber-like assemblies on bacterial membranes. Induces cytokine and chemokine producation as well as TNF/TNFA and CSF2/GMCSF production in normal human keratinocytes. Exhibits hemolytic activity against red blood cells. Exhibits antimicrobial activity against E.coli and B.megaterium (in vitro). The sequence is that of Cathelicidin antimicrobial peptide from Gorilla gorilla gorilla (Western lowland gorilla).